The sequence spans 93 residues: Small ribosomal subunit protein uS19c (93 aa).

Belongs to the universal ribosomal protein uS19 family.

The protein resides in the plastid. The protein localises to the chloroplast. In terms of biological role, protein S19 forms a complex with S13 that binds strongly to the 16S ribosomal RNA. The sequence is that of Small ribosomal subunit protein uS19c from Oryza nivara (Indian wild rice).